We begin with the raw amino-acid sequence, 63 residues long: Large ribosomal subunit protein uL29 (63 aa).

This sequence belongs to the universal ribosomal protein uL29 family.

The protein is Large ribosomal subunit protein uL29 of Pseudoalteromonas translucida (strain TAC 125).